A 238-amino-acid chain; its full sequence is SPbeta prophage-derived uncharacterized protein YorM (238 aa).

Residues 1–37 (MFKKLIDKHKKYVYHRINKMALFATIGLLGVGLVYSA) form the signal peptide. Residues 111–121 (TKTKKVQKTNT) show a composition bias toward basic residues. A disordered region spans residues 111–132 (TKTKKVQKTNTKRNLDKAVSKS).

The sequence is that of SPbeta prophage-derived uncharacterized protein YorM (yorM) from Bacillus subtilis (strain 168).